A 358-amino-acid polypeptide reads, in one-letter code: Neutral protease 2 homolog PABG_02362 (358 aa).

The signal sequence occupies residues 1-19 (MRRVSGILAVAAFTISAFA). Positions 20–182 (GVIQPVAKDA…FAAMNQFVKI (163 aa)) are excised as a propeptide. Intrachain disulfides connect Cys-188–Cys-259 and Cys-266–Cys-284. Asn-249 carries an N-linked (GlcNAc...) asparagine glycan. His-309 is a binding site for Zn(2+). Glu-310 is a catalytic residue. Zn(2+) is bound by residues His-313 and Asp-324.

This sequence belongs to the peptidase M35 family. The cofactor is Zn(2+).

The protein resides in the secreted. It catalyses the reaction Preferential cleavage of bonds with hydrophobic residues in P1'. Also 3-Asn-|-Gln-4 and 8-Gly-|-Ser-9 bonds in insulin B chain.. Secreted metalloproteinase that allows assimilation of proteinaceous substrates. Shows high activities on basic nuclear substrates such as histone and protamine. The sequence is that of Neutral protease 2 homolog PABG_02362 from Paracoccidioides brasiliensis (strain Pb03).